Consider the following 126-residue polypeptide: RutC family protein bbp_334 (126 aa).

Belongs to the RutC family.

This chain is RutC family protein bbp_334, found in Buchnera aphidicola subsp. Baizongia pistaciae (strain Bp).